Consider the following 367-residue polypeptide: Glutamate 5-kinase (367 aa).

K9 is a binding site for ATP. Residues S49, D136, and N148 each coordinate substrate. Residues 168 to 169 (TD) and 210 to 216 (TGGMKSK) each bind ATP. One can recognise a PUA domain in the interval 276-350 (SGQIEIDAGA…GMQSQHIQAR (75 aa)).

It belongs to the glutamate 5-kinase family.

It is found in the cytoplasm. The catalysed reaction is L-glutamate + ATP = L-glutamyl 5-phosphate + ADP. The protein operates within amino-acid biosynthesis; L-proline biosynthesis; L-glutamate 5-semialdehyde from L-glutamate: step 1/2. Its function is as follows. Catalyzes the transfer of a phosphate group to glutamate to form L-glutamate 5-phosphate. The polypeptide is Glutamate 5-kinase (Bacillus cereus (strain ZK / E33L)).